Consider the following 148-residue polypeptide: Probable DNA-directed RNA polymerases I, II, and III subunit RPABC3 (148 aa).

The segment at 16 to 40 (DPDGKKFDRVSRYFCDAESFKMELI) is non-specific ssDNA binding.

The protein belongs to the eukaryotic RPB8 RNA polymerase subunit family. In terms of assembly, component of the RNA polymerase I (Pol I), RNA polymerase II (Pol II) and RNA polymerase III (Pol III) complexes consisting of at least 13, 12 and 17 subunits, respectively. Directly interacts with POLR2A.

Its subcellular location is the nucleus. Functionally, DNA-dependent RNA polymerase catalyzes the transcription of DNA into RNA using the four ribonucleoside triphosphates as substrates. Common component of RNA polymerases I, II and III which synthesize ribosomal RNA precursors, mRNA precursors and many functional non-coding RNAs, and small RNAs, such as 5S rRNA and tRNAs, respectively. This chain is Probable DNA-directed RNA polymerases I, II, and III subunit RPABC3 (rpb-8), found in Caenorhabditis elegans.